The chain runs to 381 residues: Homoserine O-succinyltransferase (381 aa).

The AB hydrolase-1 domain maps to 45–360 (NAVLVCHALN…PHGHDAFLLD (316 aa)). The Nucleophile role is filled by S151. R221 is a substrate binding site. Catalysis depends on residues D321 and H354. Position 355 (D355) interacts with substrate.

It belongs to the AB hydrolase superfamily. MetX family. Homodimer.

It is found in the cytoplasm. It catalyses the reaction L-homoserine + succinyl-CoA = O-succinyl-L-homoserine + CoA. Its pathway is amino-acid biosynthesis; L-methionine biosynthesis via de novo pathway; O-succinyl-L-homoserine from L-homoserine: step 1/1. Transfers a succinyl group from succinyl-CoA to L-homoserine, forming succinyl-L-homoserine. This Burkholderia mallei (strain NCTC 10247) protein is Homoserine O-succinyltransferase.